The chain runs to 203 residues: Guanylate kinase (203 aa).

The Guanylate kinase-like domain maps to 5 to 183 (GVLYIISAPS…AVEELKSVVV (179 aa)). 12–19 (APSGAGKT) serves as a coordination point for ATP.

Belongs to the guanylate kinase family.

The protein resides in the cytoplasm. The enzyme catalyses GMP + ATP = GDP + ADP. In terms of biological role, essential for recycling GMP and indirectly, cGMP. The protein is Guanylate kinase of Geobacter metallireducens (strain ATCC 53774 / DSM 7210 / GS-15).